The sequence spans 383 residues: Putative 8-amino-7-oxononanoate synthase (383 aa).

Arg-22 serves as a coordination point for substrate. 109–110 (GY) serves as a coordination point for pyridoxal 5'-phosphate. His-134 contacts substrate. Pyridoxal 5'-phosphate is bound by residues Ser-182, 207 to 210 (DDAH), and 236 to 239 (TLSK). Position 239 is an N6-(pyridoxal phosphate)lysine (Lys-239). Thr-348 is a substrate binding site.

Belongs to the class-II pyridoxal-phosphate-dependent aminotransferase family. BioF subfamily. As to quaternary structure, homodimer. The cofactor is pyridoxal 5'-phosphate.

The catalysed reaction is 6-carboxyhexanoyl-[ACP] + L-alanine + H(+) = (8S)-8-amino-7-oxononanoate + holo-[ACP] + CO2. It functions in the pathway cofactor biosynthesis; biotin biosynthesis. Its function is as follows. Catalyzes the decarboxylative condensation of pimeloyl-[acyl-carrier protein] and L-alanine to produce 8-amino-7-oxononanoate (AON), [acyl-carrier protein], and carbon dioxide. In Caulobacter sp. (strain K31), this protein is Putative 8-amino-7-oxononanoate synthase (bioF).